We begin with the raw amino-acid sequence, 552 residues long: CTP synthase (552 aa).

Residues 1-270 (MTKFVFVTGG…DGLICDKLRL (270 aa)) form an amidoligase domain region. Ser-13 contributes to the CTP binding site. Ser-13 contacts UTP. Residues 14–19 (SLGKGI) and Asp-71 each bind ATP. Mg(2+) is bound by residues Asp-71 and Glu-144. CTP-binding positions include 151–153 (DIE), 191–196 (KTKPTQ), and Lys-227. Residues 191–196 (KTKPTQ) and Lys-227 contribute to the UTP site. The region spanning 295 to 548 (KIAMVGKYVE…VKAAIERQKA (254 aa)) is the Glutamine amidotransferase type-1 domain. L-glutamine is bound at residue Gly-357. Residue Cys-384 is the Nucleophile; for glutamine hydrolysis of the active site. L-glutamine contacts are provided by residues 385 to 388 (LGMQ), Glu-408, and Arg-474. Catalysis depends on residues His-521 and Glu-523.

This sequence belongs to the CTP synthase family. As to quaternary structure, homotetramer.

The enzyme catalyses UTP + L-glutamine + ATP + H2O = CTP + L-glutamate + ADP + phosphate + 2 H(+). It carries out the reaction L-glutamine + H2O = L-glutamate + NH4(+). It catalyses the reaction UTP + NH4(+) + ATP = CTP + ADP + phosphate + 2 H(+). Its pathway is pyrimidine metabolism; CTP biosynthesis via de novo pathway; CTP from UDP: step 2/2. With respect to regulation, allosterically activated by GTP, when glutamine is the substrate; GTP has no effect on the reaction when ammonia is the substrate. The allosteric effector GTP functions by stabilizing the protein conformation that binds the tetrahedral intermediate(s) formed during glutamine hydrolysis. Inhibited by the product CTP, via allosteric rather than competitive inhibition. Functionally, catalyzes the ATP-dependent amination of UTP to CTP with either L-glutamine or ammonia as the source of nitrogen. Regulates intracellular CTP levels through interactions with the four ribonucleotide triphosphates. This chain is CTP synthase, found in Delftia acidovorans (strain DSM 14801 / SPH-1).